Consider the following 201-residue polypeptide: Small ribosomal subunit protein uS4c (201 aa).

Positions 89-152 constitute an S4 RNA-binding domain; sequence MRLDNILFRL…NSRTLVQNLI (64 aa).

Belongs to the universal ribosomal protein uS4 family. In terms of assembly, part of the 30S ribosomal subunit. Contacts protein S5. The interaction surface between S4 and S5 is involved in control of translational fidelity.

Its subcellular location is the plastid. The protein localises to the chloroplast. In terms of biological role, one of the primary rRNA binding proteins, it binds directly to 16S rRNA where it nucleates assembly of the body of the 30S subunit. With S5 and S12 plays an important role in translational accuracy. The protein is Small ribosomal subunit protein uS4c (rps4) of Crucihimalaya wallichii (Rock-cress).